The following is a 399-amino-acid chain: S-adenosylmethionine synthase (399 aa).

G136–D141 is an ATP binding site.

This sequence belongs to the AdoMet synthase 2 family. The cofactor is Mg(2+).

The catalysed reaction is L-methionine + ATP + H2O = S-adenosyl-L-methionine + phosphate + diphosphate. The protein operates within amino-acid biosynthesis; S-adenosyl-L-methionine biosynthesis; S-adenosyl-L-methionine from L-methionine: step 1/1. Functionally, catalyzes the formation of S-adenosylmethionine from methionine and ATP. The protein is S-adenosylmethionine synthase of Methanothrix thermoacetophila (strain DSM 6194 / JCM 14653 / NBRC 101360 / PT) (Methanosaeta thermophila).